The primary structure comprises 405 residues: Polyketide biosynthesis cytochrome P450 PksS (405 aa).

A helical transmembrane segment spans residues 231–251; that stretch reads LYSMLFLLVVAGLETTVNLLG. Cys352 lines the heme pocket.

Belongs to the cytochrome P450 family.

The protein localises to the cell membrane. Its pathway is antibiotic biosynthesis; bacillaene biosynthesis. In terms of biological role, involved in the metabolism of the antibiotic polyketide bacillaene which is involved in secondary metabolism. The substrate is dihydrobacillaene. In Bacillus subtilis (strain 168), this protein is Polyketide biosynthesis cytochrome P450 PksS (pksS).